The sequence spans 239 residues: 2,3,4,5-tetrahydropyridine-2,6-dicarboxylate N-acetyltransferase (239 aa).

Belongs to the transferase hexapeptide repeat family. DapH subfamily.

The catalysed reaction is (S)-2,3,4,5-tetrahydrodipicolinate + acetyl-CoA + H2O = L-2-acetamido-6-oxoheptanedioate + CoA. The protein operates within amino-acid biosynthesis; L-lysine biosynthesis via DAP pathway; LL-2,6-diaminopimelate from (S)-tetrahydrodipicolinate (acetylase route): step 1/3. Its function is as follows. Catalyzes the transfer of an acetyl group from acetyl-CoA to tetrahydrodipicolinate. The chain is 2,3,4,5-tetrahydropyridine-2,6-dicarboxylate N-acetyltransferase from Staphylococcus carnosus (strain TM300).